The primary structure comprises 175 residues: Auxin-responsive protein IAA28 (175 aa).

Residues 1–39 form a disordered region; sequence MEEEKRLELRLAPPCHQFTSNNNINGSKQKSSTKETSFL. The short motif at 7–11 is the EAR-like (transcriptional repression) element; sequence LELRL. Positions 17 to 39 are enriched in polar residues; sequence QFTSNNNINGSKQKSSTKETSFL. The region spanning 80–161 is the PB1 domain; the sequence is ELYVKINMEG…TVKRLHVLKT (82 aa).

It belongs to the Aux/IAA family. As to quaternary structure, homodimers and heterodimers. Interacts with TPL. In terms of tissue distribution, in roots and inflorescence stems.

It localises to the nucleus. Aux/IAA proteins are short-lived transcriptional factors that function as repressors of early auxin response genes at low auxin concentrations. Repression is thought to result from the interaction with auxin response factors (ARFs), proteins that bind to the auxin-responsive promoter element (AuxRE). Formation of heterodimers with ARF proteins may alter their ability to modulate early auxin response genes expression. This chain is Auxin-responsive protein IAA28 (IAA28), found in Arabidopsis thaliana (Mouse-ear cress).